The sequence spans 687 residues: Calcium-binding protein SP84 (687 aa).

The first 19 residues, 1–19 (MMRAIYLLVVVCWAAAANA), serve as a signal peptide directing secretion. 5 EF-hand domains span residues 152–187 (LESDDITKFYKHLDNDKDNELKTEEVLKIQHTHKNK), 257–292 (LTEIDISLLYRSVDTNNDNKIIIDELKAFTGITDDV), 406–441 (KTEATVTRYMVEADIDKDSFICLEEFDEYMDIPHMV), 476–511 (IENAAFDTWFNHYDTNHNNKIEKEADGLLAKFNNDA), and 579–614 (MTERDIEDLFDELDHNDDHELTQQDFPDCWNDVKDL). Positions 592, 594, 596, 598, and 603 each coordinate Ca(2+).

As to expression, expressed in salivary glands where expression is strongest in type III cells in the posterior lobe of the principal glands (at protein level). Not expressed in midgut, Malpighian tubules or epidermis.

It is found in the secreted. Binds calcium. During feeding of the phloem sap, protein is injected into sieve tubes of rice plants. This process may suppress the sieve-element clogging and facilitate continuous ingestion from sieve tubes. This chain is Calcium-binding protein SP84, found in Nephotettix cincticeps (Green rice leafhopper).